The primary structure comprises 225 residues: UPF0173 metal-dependent hydrolase Aflv_0488 (225 aa).

It belongs to the UPF0173 family.

This chain is UPF0173 metal-dependent hydrolase Aflv_0488, found in Anoxybacillus flavithermus (strain DSM 21510 / WK1).